Consider the following 119-residue polypeptide: Large ribosomal subunit protein uL18 (119 aa).

Belongs to the universal ribosomal protein uL18 family. As to quaternary structure, part of the 50S ribosomal subunit; part of the 5S rRNA/L5/L18/L25 subcomplex. Contacts the 5S and 23S rRNAs.

Its function is as follows. This is one of the proteins that bind and probably mediate the attachment of the 5S RNA into the large ribosomal subunit, where it forms part of the central protuberance. The chain is Large ribosomal subunit protein uL18 from Nitratidesulfovibrio vulgaris (strain DP4) (Desulfovibrio vulgaris).